Here is a 569-residue protein sequence, read N- to C-terminus: Proline--tRNA ligase (569 aa).

It belongs to the class-II aminoacyl-tRNA synthetase family. ProS type 1 subfamily. Homodimer.

The protein resides in the cytoplasm. The enzyme catalyses tRNA(Pro) + L-proline + ATP = L-prolyl-tRNA(Pro) + AMP + diphosphate. In terms of biological role, catalyzes the attachment of proline to tRNA(Pro) in a two-step reaction: proline is first activated by ATP to form Pro-AMP and then transferred to the acceptor end of tRNA(Pro). As ProRS can inadvertently accommodate and process non-cognate amino acids such as alanine and cysteine, to avoid such errors it has two additional distinct editing activities against alanine. One activity is designated as 'pretransfer' editing and involves the tRNA(Pro)-independent hydrolysis of activated Ala-AMP. The other activity is designated 'posttransfer' editing and involves deacylation of mischarged Ala-tRNA(Pro). The misacylated Cys-tRNA(Pro) is not edited by ProRS. This chain is Proline--tRNA ligase, found in Lactiplantibacillus plantarum (strain ATCC BAA-793 / NCIMB 8826 / WCFS1) (Lactobacillus plantarum).